Consider the following 346-residue polypeptide: [LysW]-lysine/[LysW]-ornithine hydrolase (346 aa).

H68 is a binding site for Zn(2+). The active site involves D70. Position 92 (D92) interacts with Zn(2+). Catalysis depends on E122, which acts as the Proton acceptor. Positions 123, 146, and 317 each coordinate Zn(2+).

The protein belongs to the peptidase M20A family. LysK subfamily. Requires Zn(2+) as cofactor. Co(2+) serves as cofactor.

Its subcellular location is the cytoplasm. The enzyme catalyses [amino-group carrier protein]-C-terminal-gamma-(L-lysyl)-L-glutamate + H2O = [amino-group carrier protein]-C-terminal-L-glutamate + L-lysine. It catalyses the reaction [amino-group carrier protein]-C-terminal-gamma-(L-ornithyl)-L-glutamate + H2O = [amino-group carrier protein]-C-terminal-L-glutamate + L-ornithine. It participates in amino-acid biosynthesis; L-lysine biosynthesis via AAA pathway; L-lysine from L-alpha-aminoadipate (Thermus route): step 5/5. It functions in the pathway amino-acid biosynthesis; L-arginine biosynthesis. Functionally, catalyzes the release of L-lysine from [LysW]-gamma-L-lysine and the release of L-ornithine from [LysW]-L-ornithine. This chain is [LysW]-lysine/[LysW]-ornithine hydrolase, found in Saccharolobus islandicus (strain Y.N.15.51 / Yellowstone #2) (Sulfolobus islandicus).